The primary structure comprises 104 residues: Circadian clock oscillator protein KaiB (104 aa).

This sequence belongs to the KaiB family. The KaiABC complex composition changes during the circadian cycle to control KaiC phosphorylation. Complexes KaiC(6), KaiA(2-4):KaiC(6), KaiB(6):KaiC(6) and KaiC(6):KaiB(6):KaiA(12) are among the most important forms, many form cooperatively. Undergoes a major conformational rearrangment; in the free state forms homotetramers as a dimer of dimers. When bound to the CI domain of KaiC switches to a monomeric thioredoxin-fold (KaiB(fs)). KaiB(fs) binds CikA, leading it to dephosphorylate phospho-RpaA.

In terms of biological role, key component of the KaiABC oscillator complex, which constitutes the main circadian regulator in cyanobacteria. Complex composition changes during the circadian cycle to control KaiC phosphorylation. KaiA stimulates KaiC autophosphorylation, while KaiB sequesters KaiA, leading to KaiC autodephosphorylation. Phospho-Ser-431 KaiC accumulation triggers binding of KaiB to form the KaiB(6):KaiC(6) complex, leading to changes in output regulators CikA and SasA. KaiB switches to a thioredoxin-like fold (KaiB(fs)) when bound to KaiC. KaiB(6):KaiC(6) formation exposes a site for KaiA binding that sequesters KaiA from KaiC, making the KaiC(6):KaiB(6):KaiA(12) complex that results in KaiC autodephosphorylation. Its function is as follows. A metamorphic protein which reversibly switches between an inactive tetrameric fold and a rare, thioredoxin-like monomeric fold (KaiB(fs)). KaiB(fs) binds phospho-KaiC, KaiA and CikA. KaiA and CikA compete for binding to KaiB(fs), and KaiB(fs) and SasA compete for binding to KaiC, thus the clock oscillator and output signal pathway are tightly coupled. The chain is Circadian clock oscillator protein KaiB from Acaryochloris marina (strain MBIC 11017).